We begin with the raw amino-acid sequence, 116 residues long: NADH-quinone oxidoreductase subunit A (116 aa).

The next 3 helical transmembrane spans lie at 3–23 (FTLL…VIAL), 61–81 (FAIL…WAVI), and 88–108 (QGLI…AYAW).

It belongs to the complex I subunit 3 family. As to quaternary structure, NDH-1 is composed of 14 different subunits. Subunits NuoA, H, J, K, L, M, N constitute the membrane sector of the complex.

The protein resides in the cell inner membrane. It carries out the reaction a quinone + NADH + 5 H(+)(in) = a quinol + NAD(+) + 4 H(+)(out). Functionally, NDH-1 shuttles electrons from NADH, via FMN and iron-sulfur (Fe-S) centers, to quinones in the respiratory chain. The immediate electron acceptor for the enzyme in this species is believed to be a menaquinone. Couples the redox reaction to proton translocation (for every two electrons transferred, four hydrogen ions are translocated across the cytoplasmic membrane), and thus conserves the redox energy in a proton gradient. In Bacteroides fragilis (strain ATCC 25285 / DSM 2151 / CCUG 4856 / JCM 11019 / LMG 10263 / NCTC 9343 / Onslow / VPI 2553 / EN-2), this protein is NADH-quinone oxidoreductase subunit A.